The primary structure comprises 337 residues: Glyceraldehyde-3-phosphate dehydrogenase 3, cytosolic (337 aa).

NAD(+) contacts are provided by residues 13–14 (RI), Asp-35, and Arg-82. D-glyceraldehyde 3-phosphate-binding positions include 153 to 155 (SCT), Thr-184, 213 to 214 (TG), and Arg-236. Cys-154 serves as the catalytic Nucleophile. Asn-318 lines the NAD(+) pocket.

Belongs to the glyceraldehyde-3-phosphate dehydrogenase family. Homotetramer.

It localises to the cytoplasm. It carries out the reaction D-glyceraldehyde 3-phosphate + phosphate + NAD(+) = (2R)-3-phospho-glyceroyl phosphate + NADH + H(+). It functions in the pathway carbohydrate degradation; glycolysis; pyruvate from D-glyceraldehyde 3-phosphate: step 1/5. Key enzyme in glycolysis that catalyzes the first step of the pathway by converting D-glyceraldehyde 3-phosphate (G3P) into 3-phospho-D-glyceroyl phosphate. Essential for the maintenance of cellular ATP levels and carbohydrate metabolism. The chain is Glyceraldehyde-3-phosphate dehydrogenase 3, cytosolic (GAPC3) from Oryza sativa subsp. japonica (Rice).